Reading from the N-terminus, the 419-residue chain is Putative zinc metalloprotease SPs1691 (419 aa).

A Zn(2+)-binding site is contributed by H18. E19 is an active-site residue. H22 provides a ligand contact to Zn(2+). Transmembrane regions (helical) follow at residues L169 to V191, L301 to N323, L343 to I365, and A392 to W411. Positions G175–K274 constitute a PDZ domain.

It belongs to the peptidase M50B family. Zn(2+) is required as a cofactor.

It is found in the cell membrane. In Streptococcus pyogenes serotype M3 (strain SSI-1), this protein is Putative zinc metalloprotease SPs1691 (eep).